The sequence spans 116 residues: Nucleoid-associated protein P9301_00191 (116 aa).

Belongs to the YbaB/EbfC family. In terms of assembly, homodimer.

Its subcellular location is the cytoplasm. It localises to the nucleoid. In terms of biological role, binds to DNA and alters its conformation. May be involved in regulation of gene expression, nucleoid organization and DNA protection. The protein is Nucleoid-associated protein P9301_00191 of Prochlorococcus marinus (strain MIT 9301).